A 42-amino-acid chain; its full sequence is Aspartate-semialdehyde dehydrogenase leader peptide (42 aa).

This chain is Aspartate-semialdehyde dehydrogenase leader peptide, found in Streptococcus mutans serotype c (strain ATCC 700610 / UA159).